A 98-amino-acid polypeptide reads, in one-letter code: uncharacterized protein (98 aa).

This is an uncharacterized protein from Rickettsia prowazekii (strain Madrid E).